Reading from the N-terminus, the 382-residue chain is D-alanine--D-alanine ligase (382 aa).

The ATP-grasp domain occupies 161–372 (KVVFESAGLH…YAELIDELIH (212 aa)). 193–248 (VDRLGFPVFVKPARAGSSMGISKVDSLEGLDAAIEEARRHDLKLVIEAGIVGREIE) is an ATP binding site. Mg(2+)-binding residues include aspartate 326, glutamate 339, and asparagine 341.

Belongs to the D-alanine--D-alanine ligase family. Mg(2+) is required as a cofactor. The cofactor is Mn(2+).

It is found in the cytoplasm. It carries out the reaction 2 D-alanine + ATP = D-alanyl-D-alanine + ADP + phosphate + H(+). The protein operates within cell wall biogenesis; peptidoglycan biosynthesis. Functionally, cell wall formation. This Pseudarthrobacter chlorophenolicus (strain ATCC 700700 / DSM 12829 / CIP 107037 / JCM 12360 / KCTC 9906 / NCIMB 13794 / A6) (Arthrobacter chlorophenolicus) protein is D-alanine--D-alanine ligase.